An 822-amino-acid chain; its full sequence is Sushi domain-containing protein 2 (822 aa).

The signal sequence occupies residues 1-27; sequence MKPALLPWALLLLATALGPGPGPTADA. The SMB domain maps to 28–66; that stretch reads QESCSMRCGALDGPCSCHPTCSGLGTCCLDFRDFCLEIL. The Extracellular portion of the chain corresponds to 28–785; sequence QESCSMRCGA…PKCQPGRSYA (758 aa). Cystine bridges form between C31–C35, C31–C44, C35–C62, C42–C44, C42–C55, C48–C54, and C55–C62. N-linked (GlcNAc...) asparagine glycosylation is found at N162 and N177. The 149-residue stretch at 285 to 433 folds into the AMOP domain; it reads PVAWARTQCQ…PDCPRYMQRR (149 aa). Residues 445-639 enclose the VWFD domain; the sequence is RLASAFGDPH…NWTVHNASSL (195 aa). N-linked (GlcNAc...) asparagine glycosylation occurs at N522. The 58-residue stretch at 723-780 folds into the Sushi domain; the sequence is VSCGWLAPPPNGQKEGNRYLAGSTIYFHCDNGYSLAGAETSTCQADGTWSSPTPKCQP. Cystine bridges form between C725/C765 and C751/C778. The helical transmembrane segment at 786 to 806 threads the bilayer; sequence VLLGIIFGGLAVVAAVALVYV. At 807 to 822 the chain is on the cytoplasmic side; that stretch reads LLRRRKGNTHVWGAQP.

In terms of assembly, interacts with LGALS1; leads to an increased amount of LGALS1 on the cell surface. Interacts with GPR15LG; the interaction is direct. In terms of tissue distribution, highly expressed in breast cancer, but shows a restricted expression pattern in normal tissues such as adipose, adrenal gland, kidney, lung, mammary gland, placenta, thyroid, trachea, and uterus. Also expressed in colon; down-regulated in colon cancer tissues.

The protein localises to the cell membrane. Its function is as follows. May be a cytokine receptor for GPR15LG. May be a tumor suppressor; together with GPR15LG has a growth inhibitory effect on colon cancer cells which includes G1 cell cycle arrest. May play a role in breast tumorigenesis. In Homo sapiens (Human), this protein is Sushi domain-containing protein 2 (SUSD2).